Reading from the N-terminus, the 163-residue chain is Ribosome maturation factor RimM (163 aa).

Residues 92 to 162 (EDEFYVADLV…AGRAVVRPPE (71 aa)) form the PRC barrel domain.

It belongs to the RimM family. As to quaternary structure, binds ribosomal protein uS19.

It localises to the cytoplasm. An accessory protein needed during the final step in the assembly of 30S ribosomal subunit, possibly for assembly of the head region. Essential for efficient processing of 16S rRNA. May be needed both before and after RbfA during the maturation of 16S rRNA. It has affinity for free ribosomal 30S subunits but not for 70S ribosomes. The chain is Ribosome maturation factor RimM from Rubrobacter xylanophilus (strain DSM 9941 / JCM 11954 / NBRC 16129 / PRD-1).